The primary structure comprises 322 residues: Thiamine thiazole synthase (322 aa).

Substrate is bound by residues cysteine 84, glutamate 105–alanine 106, glycine 113, and valine 178. At cysteine 211 the chain carries 2,3-didehydroalanine (Cys). Residues aspartate 213, histidine 228, methionine 280, and arginine 290 to glycine 292 contribute to the substrate site.

It belongs to the THI4 family. As to quaternary structure, homooctamer. Requires Fe cation as cofactor. Post-translationally, during the catalytic reaction, a sulfide is transferred from Cys-211 to a reaction intermediate, generating a dehydroalanine residue.

It is found in the cytoplasm. The protein localises to the nucleus. The enzyme catalyses [ADP-thiazole synthase]-L-cysteine + glycine + NAD(+) = [ADP-thiazole synthase]-dehydroalanine + ADP-5-ethyl-4-methylthiazole-2-carboxylate + nicotinamide + 3 H2O + 2 H(+). In terms of biological role, involved in biosynthesis of the thiamine precursor thiazole. Catalyzes the conversion of NAD and glycine to adenosine diphosphate 5-(2-hydroxyethyl)-4-methylthiazole-2-carboxylic acid (ADT), an adenylated thiazole intermediate. The reaction includes an iron-dependent sulfide transfer from a conserved cysteine residue of the protein to a thiazole intermediate. The enzyme can only undergo a single turnover, which suggests it is a suicide enzyme. May have additional roles in adaptation to various stress conditions and in DNA damage tolerance. The chain is Thiamine thiazole synthase from Fusarium vanettenii (strain ATCC MYA-4622 / CBS 123669 / FGSC 9596 / NRRL 45880 / 77-13-4) (Fusarium solani subsp. pisi).